A 184-amino-acid polypeptide reads, in one-letter code: Ribosome maturation factor RimM (184 aa).

The region spanning 111–184 is the PRC barrel domain; sequence DDEFYWVDLI…HIVVDWGLDY (74 aa).

Belongs to the RimM family. As to quaternary structure, binds ribosomal protein uS19.

It is found in the cytoplasm. An accessory protein needed during the final step in the assembly of 30S ribosomal subunit, possibly for assembly of the head region. Essential for efficient processing of 16S rRNA. May be needed both before and after RbfA during the maturation of 16S rRNA. It has affinity for free ribosomal 30S subunits but not for 70S ribosomes. The protein is Ribosome maturation factor RimM of Ralstonia nicotianae (strain ATCC BAA-1114 / GMI1000) (Ralstonia solanacearum).